A 136-amino-acid polypeptide reads, in one-letter code: Small ribosomal subunit protein uS11c (136 aa).

The segment at 1–22 (MAKAIPKKGSRGRIGSRKSTRK) is disordered.

The protein belongs to the universal ribosomal protein uS11 family. As to quaternary structure, part of the 30S ribosomal subunit.

It is found in the plastid. It localises to the chloroplast. This chain is Small ribosomal subunit protein uS11c, found in Lactuca sativa (Garden lettuce).